The chain runs to 501 residues: L-ornithine N(5)-monooxygenase (501 aa).

Over residues 1–16 (MNGTSTTGNGFTNGTN) the composition is skewed to low complexity. The disordered stretch occupies residues 1–40 (MNGTSTTGNGFTNGTNYPVPKLELQPETTSTSPTRAQTHP). Residues 26-37 (PETTSTSPTRAQ) show a composition bias toward polar residues. FAD is bound by residues 92–100 (EKQSNFAWH) and Gln111. Lys116 provides a ligand contact to substrate. Val177 is a binding site for FAD. Residue 263 to 266 (SGQS) coordinates NADP(+). Residues 304 to 307 (NELF) and Asn334 contribute to the substrate site. Residue 334–336 (NYS) coordinates NADP(+). 476 to 478 (SLL) is a binding site for FAD. Position 479 (Ser479) interacts with substrate.

The protein belongs to the lysine N(6)-hydroxylase/L-ornithine N(5)-oxygenase family. Homotetramer. FAD serves as cofactor.

The enzyme catalyses L-ornithine + NADPH + O2 = N(5)-hydroxy-L-ornithine + NADP(+) + H2O. It carries out the reaction L-ornithine + NADH + O2 = N(5)-hydroxy-L-ornithine + NAD(+) + H2O. Its pathway is siderophore biosynthesis. Functionally, L-ornithine N(5)-monooxygenase; part of the siderophore biosynthetic pathway. Arthroderma benhamiae produces 2 types of extracellular siderophores, ferrichrome C and ferricrocin. The biosynthesis of these siderophores depends on the hydroxylation of ornithine to N(5)-hydroxyornithine, catalyzed by the monooxygenase sidA. The structure of ferricrocin differs from ferrichrome C only by a serine for alanine substitution and the assembly of both siderophores is suggested to be performed by the nonribosomal peptide synthase (NRPS) sidC. The protein is L-ornithine N(5)-monooxygenase of Arthroderma benhamiae (strain ATCC MYA-4681 / CBS 112371) (Trichophyton mentagrophytes).